Here is a 358-residue protein sequence, read N- to C-terminus: Phospho-N-acetylmuramoyl-pentapeptide-transferase (358 aa).

10 helical membrane-spanning segments follow: residues 28–48, 70–90, 92–112, 133–153, 165–185, 196–216, 233–253, 260–280, 285–305, and 335–355; these read AALM…ITWL, TPTM…LLWA, LTNI…AVGF, MGGQ…NPDY, VTFD…VAAS, GLAI…IYIT, VGEV…FLWF, VFMG…LALL, LVLA…IVQV, and KIII…LSVL.

The protein belongs to the glycosyltransferase 4 family. MraY subfamily. Mg(2+) serves as cofactor.

The protein resides in the cell inner membrane. The enzyme catalyses UDP-N-acetyl-alpha-D-muramoyl-L-alanyl-gamma-D-glutamyl-meso-2,6-diaminopimeloyl-D-alanyl-D-alanine + di-trans,octa-cis-undecaprenyl phosphate = di-trans,octa-cis-undecaprenyl diphospho-N-acetyl-alpha-D-muramoyl-L-alanyl-D-glutamyl-meso-2,6-diaminopimeloyl-D-alanyl-D-alanine + UMP. Its pathway is cell wall biogenesis; peptidoglycan biosynthesis. Catalyzes the initial step of the lipid cycle reactions in the biosynthesis of the cell wall peptidoglycan: transfers peptidoglycan precursor phospho-MurNAc-pentapeptide from UDP-MurNAc-pentapeptide onto the lipid carrier undecaprenyl phosphate, yielding undecaprenyl-pyrophosphoryl-MurNAc-pentapeptide, known as lipid I. The polypeptide is Phospho-N-acetylmuramoyl-pentapeptide-transferase (Desulfovibrio desulfuricans (strain ATCC 27774 / DSM 6949 / MB)).